Reading from the N-terminus, the 80-residue chain is Turripeptide VI/VII-01 (80 aa).

The N-terminal stretch at 1–22 (MRLQLILTITLLLTSFMGYRDA) is a signal peptide. Residues 23–36 (AVIQGKTERSAMKM) constitute a propeptide that is removed on maturation. 3 disulfides stabilise this stretch: cysteine 48-cysteine 61, cysteine 50-cysteine 65, and cysteine 60-cysteine 70. A propeptide spanning residues 77–80 (SSAI) is cleaved from the precursor.

As to expression, expressed by the venom duct.

It is found in the secreted. This is Turripeptide VI/VII-01 from Gemmula speciosa (Splendid gem-turris).